Here is a 1195-residue protein sequence, read N- to C-terminus: ATP-dependent DNA helicase Hel308 (1195 aa).

ATP-binding positions include Q20 and 39–46 (IPTASGKT). The 171-residue stretch at 26–196 (RGLLDKNKNF…WLNAELIVDD (171 aa)) folds into the Helicase ATP-binding domain. A DEAH box motif is present at residues 143 to 146 (DEIH). One can recognise a DOD-type homing endonuclease domain in the interval 451–584 (FIGYFIGDGY…LQFVLLRFGI (134 aa)).

Belongs to the helicase family. Hel308 subfamily. As to quaternary structure, monomer. This protein undergoes a protein self splicing that involves a post-translational excision of the intervening region (intein) followed by peptide ligation.

It carries out the reaction Couples ATP hydrolysis with the unwinding of duplex DNA by translocating in the 3'-5' direction.. The enzyme catalyses ATP + H2O = ADP + phosphate + H(+). DNA-dependent ATPase and 3'-5' DNA helicase that may be involved in repair of stalled replication forks. The sequence is that of ATP-dependent DNA helicase Hel308 from Methanocaldococcus jannaschii (strain ATCC 43067 / DSM 2661 / JAL-1 / JCM 10045 / NBRC 100440) (Methanococcus jannaschii).